Reading from the N-terminus, the 147-residue chain is Large ribosomal subunit protein uL13 (147 aa).

The protein belongs to the universal ribosomal protein uL13 family. Part of the 50S ribosomal subunit.

Functionally, this protein is one of the early assembly proteins of the 50S ribosomal subunit, although it is not seen to bind rRNA by itself. It is important during the early stages of 50S assembly. The protein is Large ribosomal subunit protein uL13 of Mycobacterium marinum (strain ATCC BAA-535 / M).